We begin with the raw amino-acid sequence, 247 residues long: MQVEAHLQKIIDQEGKVHLTLIDPASQTPERAAEIALAAVKGGTDAIMIGGSTGASGTLLDETVIKIKEKVDVPTILFPGSSAGLSRYADAVFFMSLLNSRDLGYVITNQVMGAPLVYQSQIEPISMAYLIVEPGGTVGWVGDAKLIPRKKPELAAVYALAGKYLGMHYTYLEAGSGADKPINPEMIGAVKKVLGENKLIVGGGIRDAEAAKLCASAGADMIVTGTVLEEVRDVTAKVAELVSAIKR.

Residues Asp23 and Ser52 each coordinate Mg(2+). Sn-glycerol 1-phosphate contacts are provided by residues Tyr171–Gly177, Gly203–Gly204, and Gly225–Thr226.

This sequence belongs to the GGGP/HepGP synthase family. Group II subfamily. Mg(2+) serves as cofactor.

The protein resides in the cytoplasm. The catalysed reaction is sn-glycerol 1-phosphate + (2E,6E,10E)-geranylgeranyl diphosphate = sn-3-O-(geranylgeranyl)glycerol 1-phosphate + diphosphate. The protein operates within membrane lipid metabolism; glycerophospholipid metabolism. Functionally, prenyltransferase that catalyzes the transfer of the geranylgeranyl moiety of geranylgeranyl diphosphate (GGPP) to the C3 hydroxyl of sn-glycerol-1-phosphate (G1P). This reaction is the first ether-bond-formation step in the biosynthesis of archaeal membrane lipids. In Methanosarcina barkeri (strain Fusaro / DSM 804), this protein is Geranylgeranylglyceryl phosphate synthase.